Reading from the N-terminus, the 589-residue chain is Malto-oligosyltrehalose trehalohydrolase (589 aa).

256–261 (GFDAVH) serves as a coordination point for substrate. The active-site Nucleophile is the D258. E295 acts as the Proton donor in catalysis. Substrate contacts are provided by residues 320 to 324 (DDFHT) and 390 to 395 (HDQIGN).

Belongs to the glycosyl hydrolase 13 family.

It localises to the cytoplasm. The catalysed reaction is hydrolysis of (1-&gt;4)-alpha-D-glucosidic linkage in 4-alpha-D-[(1-&gt;4)-alpha-D-glucanosyl]n trehalose to yield trehalose and (1-&gt;4)-alpha-D-glucan.. The protein operates within glycan biosynthesis; trehalose biosynthesis. The polypeptide is Malto-oligosyltrehalose trehalohydrolase (treZ) (Brevibacterium helvolum).